Here is a 429-residue protein sequence, read N- to C-terminus: FAD-dependent monooxygenase azaH (429 aa).

Residues 5–25 form a helical membrane-spanning segment; it reads SIEVAIIGAGITGITLALGLL. FAD is bound by residues E35 and G48. 2 N-linked (GlcNAc...) asparagine glycosylation sites follow: N75 and N87. R116 provides a ligand contact to FAD. Residue R199 is part of the active site. 2 residues coordinate FAD: D315 and A328.

The protein belongs to the paxM FAD-dependent monooxygenase family. It depends on FAD as a cofactor.

It is found in the membrane. The protein operates within secondary metabolite biosynthesis. Its function is as follows. FAD-dependent monooxygenase; part of the gene cluster that mediates the biosynthesis of azaphilones, a class of fungal metabolites characterized by a highly oxygenated pyrano-quinone bicyclic core and exhibiting a broad range of bioactivities. In the first step, the non-reducing polyketide synthase azaA forms the hexaketide precursor from successive condensations of five malonyl-CoA units, presumably with a simple acetyl-CoA starter unit. The reactive polyketide chain then undergoes a PT-mediated C2-C7 cyclization to afford the aromatic ring and is eventually released as an aldehyde through the R-domain. The putative ketoreductase azaE is proposed to catalyze the reduction of the terminal ketone resulting in the early culture product FK17-P2a. The monooxygenase azaH was demonstrated to be the only enzyme required to convert FK17-P2a to azanigerone E. AzaH first hydroxylates the benzaldehyde intermediate FK17-P2a at C4, which triggers the formation of the pyran-ring to afford azanigerone E. In parallel, the 2,4-dimethylhexanoyl chain is synthesized by the HR-PKS azaB and is proposed to be transferred to the C4-hydroxyl of azanigerone E by the acyltransferase azaD directly from the ACP domain of azaB. Alternatively, the 2,4-dimethyl-hexanoyl chain may be offloaded from the HR-PKS as a carboxylic acid and converted to an acyl-CoA by azaF. The resulting acyl-CoA molecule could then be taken up as a substrate by AzaD to form azanigerone B. To yield the carboxylic acid substituent in azanigerone A, the hydroxypropyl side chain of azanigerone B would need to undergo a C-C oxidative cleavage catalyzed by cytochrome P450 AzaI. AzaI is proposed to act on a vicinal diol that leads to a C-C bond scission either through an alkoxyradical intermediate or a peroxy complex. In the biosynthesis of azanigerone A, azanigerone B first undergoes hydroxylation at C10, possibly catalyzed by one of the two FAD-dependent monooxygenases encoded in the cluster, azaG or azaL, resulting in the vicinal diol azanigerone C. Oxidative cleavage of azanigerone C by azaI would yield the corresponding aldehyde derivative of azanigerone A. Finally, the dehydrogenase azaJ is proposed to convert the aldehyde functional group into the carboxylic acid, completing the conversion from azanigerone B to azanigerone A. Alternatively, the oxidation of aldehyde to carboxylic acid may be catalyzed by the same P450 enzyme azaI via consecutive oxidation or by endogenous alcohol dehydrogenase. This chain is FAD-dependent monooxygenase azaH, found in Aspergillus niger (strain ATCC 1015 / CBS 113.46 / FGSC A1144 / LSHB Ac4 / NCTC 3858a / NRRL 328 / USDA 3528.7).